The sequence spans 448 residues: Homogentisate 1,2-dioxygenase (448 aa).

Residue H303 is the Proton acceptor of the active site. The Fe cation site is built by H346 and E352. The homogentisate site is built by Y361 and H382. Fe cation is bound at residue H382.

Belongs to the homogentisate dioxygenase family. As to quaternary structure, hexamer; dimer of trimers. Fe cation is required as a cofactor.

It catalyses the reaction homogentisate + O2 = 4-maleylacetoacetate + H(+). Its pathway is amino-acid degradation; L-phenylalanine degradation; acetoacetate and fumarate from L-phenylalanine: step 4/6. In terms of biological role, involved in the catabolism of homogentisate (2,5-dihydroxyphenylacetate or 2,5-OH-PhAc), a central intermediate in the degradation of phenylalanine and tyrosine. Catalyzes the oxidative ring cleavage of the aromatic ring of homogentisate to yield maleylacetoacetate. The protein is Homogentisate 1,2-dioxygenase of Rhodopseudomonas palustris (strain HaA2).